The sequence spans 466 residues: Exodeoxyribonuclease 7 large subunit (466 aa).

This sequence belongs to the XseA family. In terms of assembly, heterooligomer composed of large and small subunits.

It is found in the cytoplasm. It carries out the reaction Exonucleolytic cleavage in either 5'- to 3'- or 3'- to 5'-direction to yield nucleoside 5'-phosphates.. Its function is as follows. Bidirectionally degrades single-stranded DNA into large acid-insoluble oligonucleotides, which are then degraded further into small acid-soluble oligonucleotides. This is Exodeoxyribonuclease 7 large subunit from Ruthia magnifica subsp. Calyptogena magnifica.